The primary structure comprises 302 residues: Sulfate adenylyltransferase subunit 2 (302 aa).

The protein belongs to the PAPS reductase family. CysD subfamily. Heterodimer composed of CysD, the smaller subunit, and CysN.

The catalysed reaction is sulfate + ATP + H(+) = adenosine 5'-phosphosulfate + diphosphate. The protein operates within sulfur metabolism; hydrogen sulfide biosynthesis; sulfite from sulfate: step 1/3. Functionally, with CysN forms the ATP sulfurylase (ATPS) that catalyzes the adenylation of sulfate producing adenosine 5'-phosphosulfate (APS) and diphosphate, the first enzymatic step in sulfur assimilation pathway. APS synthesis involves the formation of a high-energy phosphoric-sulfuric acid anhydride bond driven by GTP hydrolysis by CysN coupled to ATP hydrolysis by CysD. The chain is Sulfate adenylyltransferase subunit 2 from Citrobacter koseri (strain ATCC BAA-895 / CDC 4225-83 / SGSC4696).